Consider the following 229-residue polypeptide: Large ribosomal subunit protein uL1 (229 aa).

Belongs to the universal ribosomal protein uL1 family. As to quaternary structure, part of the 50S ribosomal subunit.

Functionally, binds directly to 23S rRNA. The L1 stalk is quite mobile in the ribosome, and is involved in E site tRNA release. Its function is as follows. Protein L1 is also a translational repressor protein, it controls the translation of the L11 operon by binding to its mRNA. The chain is Large ribosomal subunit protein uL1 from Clostridium acetobutylicum (strain ATCC 824 / DSM 792 / JCM 1419 / IAM 19013 / LMG 5710 / NBRC 13948 / NRRL B-527 / VKM B-1787 / 2291 / W).